The sequence spans 275 residues: Dermonecrotic toxin SpeSicTox-betaIIA2iii (275 aa).

H5 is a catalytic residue. E25 and D27 together coordinate Mg(2+). H41 serves as the catalytic Nucleophile. 2 cysteine pairs are disulfide-bonded: C45-C51 and C47-C190. A Mg(2+)-binding site is contributed by D85.

This sequence belongs to the arthropod phospholipase D family. Class II subfamily. Mg(2+) serves as cofactor. As to expression, expressed by the venom gland.

The protein localises to the secreted. It catalyses the reaction an N-(acyl)-sphingosylphosphocholine = an N-(acyl)-sphingosyl-1,3-cyclic phosphate + choline. It carries out the reaction an N-(acyl)-sphingosylphosphoethanolamine = an N-(acyl)-sphingosyl-1,3-cyclic phosphate + ethanolamine. The enzyme catalyses a 1-acyl-sn-glycero-3-phosphocholine = a 1-acyl-sn-glycero-2,3-cyclic phosphate + choline. The catalysed reaction is a 1-acyl-sn-glycero-3-phosphoethanolamine = a 1-acyl-sn-glycero-2,3-cyclic phosphate + ethanolamine. Its function is as follows. Dermonecrotic toxins cleave the phosphodiester linkage between the phosphate and headgroup of certain phospholipids (sphingolipid and lysolipid substrates), forming an alcohol (often choline) and a cyclic phosphate. This toxin acts on sphingomyelin (SM). It may also act on ceramide phosphoethanolamine (CPE), lysophosphatidylcholine (LPC) and lysophosphatidylethanolamine (LPE), but not on lysophosphatidylserine (LPS), and lysophosphatidylglycerol (LPG). It acts by transphosphatidylation, releasing exclusively cyclic phosphate products as second products. Induces dermonecrosis, hemolysis, increased vascular permeability, edema, inflammatory response, and platelet aggregation. In Sicarius peruensis (Six-eyed sand spider), this protein is Dermonecrotic toxin SpeSicTox-betaIIA2iii.